The primary structure comprises 92 residues: RNA-binding protein Hfq (92 aa).

In terms of domain architecture, Sm spans 9–68 (DPFLNALRRERVPVSIYLVNGIKLQGQVESFDQFVILLKNTVSQMVYKHAISTVVPSRPF). Residues 73–82 (HQATNAQAGY) are compositionally biased toward polar residues. Residues 73–92 (HQATNAQAGYNAQHDDGDEK) form a disordered region.

This sequence belongs to the Hfq family. As to quaternary structure, homohexamer.

Its function is as follows. RNA chaperone that binds small regulatory RNA (sRNAs) and mRNAs to facilitate mRNA translational regulation in response to envelope stress, environmental stress and changes in metabolite concentrations. Also binds with high specificity to tRNAs. The sequence is that of RNA-binding protein Hfq from Shewanella pealeana (strain ATCC 700345 / ANG-SQ1).